A 170-amino-acid polypeptide reads, in one-letter code: Large ribosomal subunit protein uL10 (170 aa).

The protein belongs to the universal ribosomal protein uL10 family. Part of the ribosomal stalk of the 50S ribosomal subunit. The N-terminus interacts with L11 and the large rRNA to form the base of the stalk. The C-terminus forms an elongated spine to which L12 dimers bind in a sequential fashion forming a multimeric L10(L12)X complex.

Forms part of the ribosomal stalk, playing a central role in the interaction of the ribosome with GTP-bound translation factors. The polypeptide is Large ribosomal subunit protein uL10 (Fusobacterium nucleatum subsp. nucleatum (strain ATCC 25586 / DSM 15643 / BCRC 10681 / CIP 101130 / JCM 8532 / KCTC 2640 / LMG 13131 / VPI 4355)).